A 122-amino-acid polypeptide reads, in one-letter code: Ribosome-binding factor A (122 aa).

It belongs to the RbfA family. In terms of assembly, monomer. Binds 30S ribosomal subunits, but not 50S ribosomal subunits or 70S ribosomes.

The protein localises to the cytoplasm. One of several proteins that assist in the late maturation steps of the functional core of the 30S ribosomal subunit. Associates with free 30S ribosomal subunits (but not with 30S subunits that are part of 70S ribosomes or polysomes). Required for efficient processing of 16S rRNA. May interact with the 5'-terminal helix region of 16S rRNA. The chain is Ribosome-binding factor A from Opitutus terrae (strain DSM 11246 / JCM 15787 / PB90-1).